The primary structure comprises 217 residues: Vesicle transport through interaction with t-SNAREs homolog 1A (217 aa).

Topologically, residues 1–192 are cytoplasmic; that stretch reads MSSDFEGYEQ…GMLRRIIQNR (192 aa). 2 coiled-coil regions span residues 31–92 and 112–178; these read PDEK…KRSR and ENQR…GKSS. A helical; Anchor for type IV membrane protein membrane pass occupies residues 193-213; sequence ILLVILGIIVVIAILTAIAFF. Topologically, residues 214–217 are vesicular; it reads VKGH.

Belongs to the VTI1 family. Interacts with distinct SNARE complexes that contain either STX5 or STX6. Interacts with NAPA and, to a lesser extent, with NAPG. Identified in a complex containing STX6, STX12, VAMP4 and VTI1A. In terms of tissue distribution, widely expressed.

The protein localises to the golgi apparatus membrane. In terms of biological role, V-SNARE that mediates vesicle transport pathways through interactions with t-SNAREs on the target membrane. These interactions are proposed to mediate aspects of the specificity of vesicle trafficking and to promote fusion of the lipid bilayers. Involved in vesicular transport from the late endosomes to the trans-Golgi network. Along with VAMP7, involved in an non-conventional RAB1-dependent traffic route to the cell surface used by KCNIP1 and KCND2. May be concerned with increased secretion of cytokines associated with cellular senescence. In Mus musculus (Mouse), this protein is Vesicle transport through interaction with t-SNAREs homolog 1A (Vti1a).